Consider the following 259-residue polypeptide: Global transcriptional regulator CodY (259 aa).

Residues 1-155 are GAF domain; it reads MELLAKTRKL…SSTVVGMEIL (155 aa). The segment at residues 203-222 is a DNA-binding region (H-T-H motif); the sequence is ASKIADRVGITRSVIVNALR. At Ser215 the chain carries Phosphoserine.

It belongs to the CodY family.

The protein resides in the cytoplasm. In terms of biological role, DNA-binding global transcriptional regulator which is involved in the adaptive response to starvation and acts by directly or indirectly controlling the expression of numerous genes in response to nutrient availability. During rapid exponential growth, CodY is highly active and represses genes whose products allow adaptation to nutrient depletion. In Bacillus cereus (strain ATCC 10987 / NRS 248), this protein is Global transcriptional regulator CodY.